The sequence spans 358 residues: UDP-N-acetylglucosamine--N-acetylmuramyl-(pentapeptide) pyrophosphoryl-undecaprenol N-acetylglucosamine transferase (358 aa).

Residues 11 to 13 (TGG), N120, R161, S188, and Q282 each bind UDP-N-acetyl-alpha-D-glucosamine.

It belongs to the glycosyltransferase 28 family. MurG subfamily.

The protein resides in the cell inner membrane. The catalysed reaction is di-trans,octa-cis-undecaprenyl diphospho-N-acetyl-alpha-D-muramoyl-L-alanyl-D-glutamyl-meso-2,6-diaminopimeloyl-D-alanyl-D-alanine + UDP-N-acetyl-alpha-D-glucosamine = di-trans,octa-cis-undecaprenyl diphospho-[N-acetyl-alpha-D-glucosaminyl-(1-&gt;4)]-N-acetyl-alpha-D-muramoyl-L-alanyl-D-glutamyl-meso-2,6-diaminopimeloyl-D-alanyl-D-alanine + UDP + H(+). It functions in the pathway cell wall biogenesis; peptidoglycan biosynthesis. Functionally, cell wall formation. Catalyzes the transfer of a GlcNAc subunit on undecaprenyl-pyrophosphoryl-MurNAc-pentapeptide (lipid intermediate I) to form undecaprenyl-pyrophosphoryl-MurNAc-(pentapeptide)GlcNAc (lipid intermediate II). The polypeptide is UDP-N-acetylglucosamine--N-acetylmuramyl-(pentapeptide) pyrophosphoryl-undecaprenol N-acetylglucosamine transferase (Synechococcus sp. (strain CC9902)).